The sequence spans 89 residues: Putative ankyrin repeat protein RF_1157 (89 aa).

Residues Y2–L32 form an ANK repeat.

In Rickettsia felis (strain ATCC VR-1525 / URRWXCal2) (Rickettsia azadi), this protein is Putative ankyrin repeat protein RF_1157.